Consider the following 231-residue polypeptide: NADH-ubiquinone oxidoreductase chain 4 (231 aa).

6 consecutive transmembrane segments (helical) span residues 1 to 21 (PIAG…YGII), 34 to 54 (LFLP…LTCL), 61 to 80 (SLIA…AIII), 84 to 106 (WGLS…LFCL), 128 to 148 (ILPM…ATPP), and 169 to 189 (TIIL…HMFL).

This sequence belongs to the complex I subunit 4 family.

The protein localises to the mitochondrion membrane. The enzyme catalyses a ubiquinone + NADH + 5 H(+)(in) = a ubiquinol + NAD(+) + 4 H(+)(out). Its function is as follows. Core subunit of the mitochondrial membrane respiratory chain NADH dehydrogenase (Complex I) that is believed to belong to the minimal assembly required for catalysis. Complex I functions in the transfer of electrons from NADH to the respiratory chain. The immediate electron acceptor for the enzyme is believed to be ubiquinone. In Metlapilcoatlus nummifer (Mexican jumping pitviper), this protein is NADH-ubiquinone oxidoreductase chain 4 (MT-ND4).